A 344-amino-acid polypeptide reads, in one-letter code: MATSFLFSLILLLITALSLPFPLHASSVDPLSAGATTVRYWNRKIPNNAPHPDFFLSLLSPLPASVSSSLSSPLSISPSICRSARLLCPNSTYFQSLSSTVFIDGCTFSYSCTFTYEHTNITIKPGIFFREQELKEGNVVRMPDIANELTTARSSFLPRSIADRIPFKAEAVKSLFGLEPNTTLAKAVDETVAQCQSSPSKGETKRCVTSAEDMIDFAVAMLGDDIVVRSTVLPNGPGESIMIGKVKGINGGKITSSVSCHEYLFPYMVYYCHSVPKIRVYEAEILSVQTKEKINSGVAICHIDTSAWNAGHPAFVALGGKPGQNKVCHWIFNGSMTWVIADKS.

The first 25 residues, M1–A25, serve as a signal peptide directing secretion. 4 N-linked (GlcNAc...) asparagine glycosylation sites follow: N90, N120, N181, and N333. The 214-residue stretch at F128–A341 folds into the BURP domain.

Expressed in roots, stems, leaves and panicles.

This Oryza sativa subsp. japonica (Rice) protein is BURP domain-containing protein 16 (BURP16).